A 215-amino-acid polypeptide reads, in one-letter code: tRNA (guanine-N(7)-)-methyltransferase (215 aa).

S-adenosyl-L-methionine is bound by residues Glu44, Glu69, Asp96, and Asp118. Asp118 is an active-site residue. Substrate-binding positions include Lys122, Asp154, and 191–194 (TEYE).

This sequence belongs to the class I-like SAM-binding methyltransferase superfamily. TrmB family.

It catalyses the reaction guanosine(46) in tRNA + S-adenosyl-L-methionine = N(7)-methylguanosine(46) in tRNA + S-adenosyl-L-homocysteine. It participates in tRNA modification; N(7)-methylguanine-tRNA biosynthesis. Catalyzes the formation of N(7)-methylguanine at position 46 (m7G46) in tRNA. This is tRNA (guanine-N(7)-)-methyltransferase from Exiguobacterium sp. (strain ATCC BAA-1283 / AT1b).